The chain runs to 248 residues: 3-deoxy-manno-octulosonate cytidylyltransferase (248 aa).

This sequence belongs to the KdsB family.

It localises to the cytoplasm. The catalysed reaction is 3-deoxy-alpha-D-manno-oct-2-ulosonate + CTP = CMP-3-deoxy-beta-D-manno-octulosonate + diphosphate. It functions in the pathway nucleotide-sugar biosynthesis; CMP-3-deoxy-D-manno-octulosonate biosynthesis; CMP-3-deoxy-D-manno-octulosonate from 3-deoxy-D-manno-octulosonate and CTP: step 1/1. The protein operates within bacterial outer membrane biogenesis; lipopolysaccharide biosynthesis. Activates KDO (a required 8-carbon sugar) for incorporation into bacterial lipopolysaccharide in Gram-negative bacteria. This chain is 3-deoxy-manno-octulosonate cytidylyltransferase, found in Salmonella paratyphi A (strain ATCC 9150 / SARB42).